The primary structure comprises 225 residues: ATP-dependent Clp protease proteolytic subunit (225 aa).

Ser101 acts as the Nucleophile in catalysis. Residue His126 is part of the active site.

The protein belongs to the peptidase S14 family. Component of the chloroplastic Clp protease core complex.

The protein resides in the plastid. The protein localises to the chloroplast stroma. The catalysed reaction is Hydrolysis of proteins to small peptides in the presence of ATP and magnesium. alpha-casein is the usual test substrate. In the absence of ATP, only oligopeptides shorter than five residues are hydrolyzed (such as succinyl-Leu-Tyr-|-NHMec, and Leu-Tyr-Leu-|-Tyr-Trp, in which cleavage of the -Tyr-|-Leu- and -Tyr-|-Trp bonds also occurs).. Its function is as follows. Cleaves peptides in various proteins in a process that requires ATP hydrolysis. Has a chymotrypsin-like activity. Plays a major role in the degradation of misfolded proteins. In Chlorokybus atmophyticus (Soil alga), this protein is ATP-dependent Clp protease proteolytic subunit.